The sequence spans 311 residues: MALGGVGRGGAARAAWPRLLLAALAPALALAGPALPEVLFRCPPCTAERLAACSPAARPPCPELVREPGCGCCPVCARLEDEACGVYTPRCAAGLRCYPDPGAELPPQALVQGQGTCARPPDTDEYGASTEPPADNGDDRSESILAENHVDSTGGMMSGASSRKPLKTGMKEMPVMREKVNEQQRQMGKVGKAHHNHEDSKKSRMPTGRTPCQQELDQVLERISTMRLPDERGPLEHLYSLHIPNCDKHGLYNLKQCKMSVNGQRGECWCVDPIHGKVIQGAPTIRGDPECHLFYTAHEQEDRGAHALRSQ.

The N-terminal stretch at 1–36 (MALGGVGRGGAARAAWPRLLLAALAPALALAGPALP) is a signal peptide. The IGFBP N-terminal domain occupies 38–120 (VLFRCPPCTA…VQGQGTCARP (83 aa)). 6 disulfide bridges follow: Cys-42-Cys-70, Cys-45-Cys-72, Cys-53-Cys-73, Cys-61-Cys-76, Cys-84-Cys-97, and Cys-91-Cys-117. Disordered stretches follow at residues 112 to 168 (QGQG…PLKT) and 188 to 210 (GKVG…TGRT). One can recognise a Thyroglobulin type-1 domain in the interval 209 to 291 (RTPCQQELDQ…APTIRGDPEC (83 aa)). 3 disulfides stabilise this stretch: Cys-212-Cys-246, Cys-257-Cys-268, and Cys-270-Cys-291. The short motif at 286 to 288 (RGD) is the Cell attachment site element.

In terms of assembly, binds IGF2 more than IGF1.

Its subcellular location is the secreted. Functionally, inhibits IGF-mediated growth and developmental rates. IGF-binding proteins prolong the half-life of the IGFs and have been shown to either inhibit or stimulate the growth promoting effects of the IGFs on cell culture. They alter the interaction of IGFs with their cell surface receptors. This Gallus gallus (Chicken) protein is Insulin-like growth factor-binding protein 2 (IGFBP2).